The primary structure comprises 415 residues: Serine hydroxymethyltransferase (415 aa).

Residues L117 and 121–123 each bind (6S)-5,6,7,8-tetrahydrofolate; that span reads GHL. K226 is modified (N6-(pyridoxal phosphate)lysine).

It belongs to the SHMT family. As to quaternary structure, homodimer. Pyridoxal 5'-phosphate serves as cofactor.

The protein resides in the cytoplasm. It catalyses the reaction (6R)-5,10-methylene-5,6,7,8-tetrahydrofolate + glycine + H2O = (6S)-5,6,7,8-tetrahydrofolate + L-serine. It functions in the pathway one-carbon metabolism; tetrahydrofolate interconversion. The protein operates within amino-acid biosynthesis; glycine biosynthesis; glycine from L-serine: step 1/1. Catalyzes the reversible interconversion of serine and glycine with tetrahydrofolate (THF) serving as the one-carbon carrier. This reaction serves as the major source of one-carbon groups required for the biosynthesis of purines, thymidylate, methionine, and other important biomolecules. Also exhibits THF-independent aldolase activity toward beta-hydroxyamino acids, producing glycine and aldehydes, via a retro-aldol mechanism. This Dehalococcoides mccartyi (strain ATCC BAA-2100 / JCM 16839 / KCTC 5957 / BAV1) protein is Serine hydroxymethyltransferase.